We begin with the raw amino-acid sequence, 310 residues long: Putative S-adenosyl-L-methionine-dependent methyltransferase Mb0151 (310 aa).

S-adenosyl-L-methionine is bound by residues Asp132 and 161–162; that span reads DL.

Belongs to the UPF0677 family.

In terms of biological role, exhibits S-adenosyl-L-methionine-dependent methyltransferase activity. This Mycobacterium bovis (strain ATCC BAA-935 / AF2122/97) protein is Putative S-adenosyl-L-methionine-dependent methyltransferase Mb0151.